Consider the following 79-residue polypeptide: Acyl carrier protein (79 aa).

Positions D2–V77 constitute a Carrier domain. Position 37 is an O-(pantetheine 4'-phosphoryl)serine (S37).

The protein belongs to the acyl carrier protein (ACP) family. Post-translationally, 4'-phosphopantetheine is transferred from CoA to a specific serine of apo-ACP by AcpS. This modification is essential for activity because fatty acids are bound in thioester linkage to the sulfhydryl of the prosthetic group.

The protein resides in the cytoplasm. Its pathway is lipid metabolism; fatty acid biosynthesis. Carrier of the growing fatty acid chain in fatty acid biosynthesis. This Cupriavidus pinatubonensis (strain JMP 134 / LMG 1197) (Cupriavidus necator (strain JMP 134)) protein is Acyl carrier protein.